The chain runs to 212 residues: Uridine kinase (212 aa).

13–20 contributes to the ATP binding site; the sequence is GASASGKS.

This sequence belongs to the uridine kinase family.

It is found in the cytoplasm. The enzyme catalyses uridine + ATP = UMP + ADP + H(+). It carries out the reaction cytidine + ATP = CMP + ADP + H(+). It functions in the pathway pyrimidine metabolism; CTP biosynthesis via salvage pathway; CTP from cytidine: step 1/3. The protein operates within pyrimidine metabolism; UMP biosynthesis via salvage pathway; UMP from uridine: step 1/1. In Shewanella baltica (strain OS223), this protein is Uridine kinase.